The primary structure comprises 428 residues: Enolase (428 aa).

Q164 contacts (2R)-2-phosphoglycerate. Residue E208 is the Proton donor of the active site. The Mg(2+) site is built by D245, E286, and D313. The (2R)-2-phosphoglycerate site is built by K338, R367, S368, and K389. K338 acts as the Proton acceptor in catalysis.

The protein belongs to the enolase family. Mg(2+) is required as a cofactor.

The protein localises to the cytoplasm. Its subcellular location is the secreted. It localises to the cell surface. It catalyses the reaction (2R)-2-phosphoglycerate = phosphoenolpyruvate + H2O. Its pathway is carbohydrate degradation; glycolysis; pyruvate from D-glyceraldehyde 3-phosphate: step 4/5. Its function is as follows. Catalyzes the reversible conversion of 2-phosphoglycerate (2-PG) into phosphoenolpyruvate (PEP). It is essential for the degradation of carbohydrates via glycolysis. The protein is Enolase of Pyrococcus horikoshii (strain ATCC 700860 / DSM 12428 / JCM 9974 / NBRC 100139 / OT-3).